We begin with the raw amino-acid sequence, 314 residues long: 4-hydroxy-3-methylbut-2-enyl diphosphate reductase (314 aa).

Residue cysteine 12 participates in [4Fe-4S] cluster binding. 2 residues coordinate (2E)-4-hydroxy-3-methylbut-2-enyl diphosphate: histidine 43 and histidine 81. Dimethylallyl diphosphate-binding residues include histidine 43 and histidine 81. The isopentenyl diphosphate site is built by histidine 43 and histidine 81. Position 103 (cysteine 103) interacts with [4Fe-4S] cluster. Histidine 131 provides a ligand contact to (2E)-4-hydroxy-3-methylbut-2-enyl diphosphate. Histidine 131 lines the dimethylallyl diphosphate pocket. Histidine 131 contacts isopentenyl diphosphate. Catalysis depends on glutamate 133, which acts as the Proton donor. Threonine 170 provides a ligand contact to (2E)-4-hydroxy-3-methylbut-2-enyl diphosphate. Cysteine 198 is a binding site for [4Fe-4S] cluster. Residues serine 226, asparagine 228, and serine 271 each contribute to the (2E)-4-hydroxy-3-methylbut-2-enyl diphosphate site. Residues serine 226, asparagine 228, and serine 271 each coordinate dimethylallyl diphosphate. Serine 226, asparagine 228, and serine 271 together coordinate isopentenyl diphosphate.

It belongs to the IspH family. The cofactor is [4Fe-4S] cluster.

It catalyses the reaction isopentenyl diphosphate + 2 oxidized [2Fe-2S]-[ferredoxin] + H2O = (2E)-4-hydroxy-3-methylbut-2-enyl diphosphate + 2 reduced [2Fe-2S]-[ferredoxin] + 2 H(+). It carries out the reaction dimethylallyl diphosphate + 2 oxidized [2Fe-2S]-[ferredoxin] + H2O = (2E)-4-hydroxy-3-methylbut-2-enyl diphosphate + 2 reduced [2Fe-2S]-[ferredoxin] + 2 H(+). It participates in isoprenoid biosynthesis; dimethylallyl diphosphate biosynthesis; dimethylallyl diphosphate from (2E)-4-hydroxy-3-methylbutenyl diphosphate: step 1/1. The protein operates within isoprenoid biosynthesis; isopentenyl diphosphate biosynthesis via DXP pathway; isopentenyl diphosphate from 1-deoxy-D-xylulose 5-phosphate: step 6/6. Its function is as follows. Catalyzes the conversion of 1-hydroxy-2-methyl-2-(E)-butenyl 4-diphosphate (HMBPP) into a mixture of isopentenyl diphosphate (IPP) and dimethylallyl diphosphate (DMAPP). Acts in the terminal step of the DOXP/MEP pathway for isoprenoid precursor biosynthesis. This Bacillus pumilus (strain SAFR-032) protein is 4-hydroxy-3-methylbut-2-enyl diphosphate reductase.